The sequence spans 170 residues: M-agglutinin (170 aa).

Positions 1-24 (MNLKKIAIASSVFAGITMALTCHA) are cleaved as a signal peptide.

Functionally, this protein is a non-fimbrial hemagglutinin that is specific for blood group M. The sequence is that of M-agglutinin (bmaE) from Escherichia coli.